The sequence spans 1402 residues: DNA-directed RNA polymerase subunit beta' (1402 aa).

4 residues coordinate Zn(2+): Cys-73, Cys-75, Cys-88, and Cys-91. The Mg(2+) site is built by Asp-464, Asp-466, and Asp-468. Residues Cys-812, Cys-886, Cys-893, and Cys-896 each contribute to the Zn(2+) site.

Belongs to the RNA polymerase beta' chain family. As to quaternary structure, the RNAP catalytic core consists of 2 alpha, 1 beta, 1 beta' and 1 omega subunit. When a sigma factor is associated with the core the holoenzyme is formed, which can initiate transcription. Mg(2+) is required as a cofactor. Zn(2+) serves as cofactor.

It catalyses the reaction RNA(n) + a ribonucleoside 5'-triphosphate = RNA(n+1) + diphosphate. Its function is as follows. DNA-dependent RNA polymerase catalyzes the transcription of DNA into RNA using the four ribonucleoside triphosphates as substrates. The protein is DNA-directed RNA polymerase subunit beta' of Rhodopseudomonas palustris (strain ATCC BAA-98 / CGA009).